Here is a 563-residue protein sequence, read N- to C-terminus: Pentatricopeptide repeat-containing protein At4g39620, chloroplastic (563 aa).

The N-terminal 47 residues, 1–47 (MDYLLTSPSSLRFSDFISSIPKETDHKWLRFSVNLGDARRSTRTRIT), are a transit peptide targeting the chloroplast. PPR repeat units follow at residues 132-166 (DNGVYSKLISVMGKKGQTRMAMWLFSEMKNSGCRP), 167-197 (DASVYNALITAHLHTRDKAKALEKVRGYLDK), 207-241 (NVVTYNILLRAFAQSGKVDQVNALFKDLDMSPVSP), 242-276 (DVYTFNGVMDAYGKNGMIKEMEAVLTRMRSNECKP), 277-311 (DIITFNVLIDSYGKKQEFEKMEQTFKSLMRSKEKP), 312-346 (TLPTFNSMIINYGKARMIDKAEWVFKKMNDMNYIP), 347-381 (SFITYECMIMMYGYCGSVSRAREIFEEVGESDRVL), 382-416 (KASTLNAMLEVYCRNGLYIEADKLFHNASAFRVHP), and 417-451 (DASTYKFLYKAYTKADMKEQVQILMKKMEKDGIVP). Disordered stretches follow at residues 468-501 (PGSGSENRKSTRSSRSRDSPKGRGGNQLTEFQDK) and 520-551 (NLSGHDKGSRDESRKPSQEKQPLFASDQNNMM). Over residues 520 to 537 (NLSGHDKGSRDESRKPSQ) the composition is skewed to basic and acidic residues.

The protein belongs to the PPR family. P subfamily.

It is found in the plastid. The protein localises to the chloroplast. In terms of biological role, essential for embryo development. The sequence is that of Pentatricopeptide repeat-containing protein At4g39620, chloroplastic from Arabidopsis thaliana (Mouse-ear cress).